Reading from the N-terminus, the 165-residue chain is Large ribosomal subunit protein uL10 (165 aa).

Belongs to the universal ribosomal protein uL10 family. As to quaternary structure, part of the ribosomal stalk of the 50S ribosomal subunit. The N-terminus interacts with L11 and the large rRNA to form the base of the stalk. The C-terminus forms an elongated spine to which L12 dimers bind in a sequential fashion forming a multimeric L10(L12)X complex.

Functionally, forms part of the ribosomal stalk, playing a central role in the interaction of the ribosome with GTP-bound translation factors. This chain is Large ribosomal subunit protein uL10, found in Buchnera aphidicola subsp. Schizaphis graminum (strain Sg).